The following is a 61-amino-acid chain: Small ribosomal subunit protein uS14B (61 aa).

Residues Cys-24, Cys-27, Cys-40, and Cys-43 each coordinate Zn(2+).

It belongs to the universal ribosomal protein uS14 family. Zinc-binding uS14 subfamily. Part of the 30S ribosomal subunit. Contacts proteins S3 and S10. Zn(2+) serves as cofactor.

In terms of biological role, binds 16S rRNA, required for the assembly of 30S particles and may also be responsible for determining the conformation of the 16S rRNA at the A site. The protein is Small ribosomal subunit protein uS14B of Limosilactobacillus reuteri (strain DSM 20016) (Lactobacillus reuteri).